The primary structure comprises 566 residues: MTMELEEIVYKYALWNAVKHNGQAQVGPVVSKVFAERPELKANAKEVVKLAEKMVAKVNAMSLEQQTAELQKYPELLEERKKEEKKTLSPLPNVKGTVVTRFAPNPDGPLHLGNARAAVLSFEYAKMYKGKFILRFDDTDPKVKKPIKEAYDWIRDDLRWLNITWDLEFKASERMSAYYNVAKVMLEKGFAYVDTLSDAEFKAWRDSRNKTVYKPRTNPPEVNLELWEKMLNGDFDEGKAVVRIKTNPEDPDPSKIDWVMLRIIDTKRNPHPIAGDKFRVWPTYNFATAVDDHEFGITHILRAKEHTTNTEKQRWVYDYMGWEMPTVLEFGRLKLEGFMMSKSKIRGMLETGSERDDPRLPTLAGLRRRGIIPDTVREIIIQVGLKVTDATISFDNIASVNRKLLDPVAKRLMFVREGVLFKLEIPQEMKAKVPLIPARQEFREIFVKPGDEIYLDKGDVEEGKVVRLMDLCNVKIEGDRLRFLSQDLESAKRMGANIIQWVKKSESKSVNVIKADPNKDVEEIRGYGEGYFETLKPGDIVQLVRYGFARVDSISRGEITMIFAHE.

Positions 104–114 match the 'HIGH' region motif; sequence PNPDGPLHLGN.

The protein belongs to the class-I aminoacyl-tRNA synthetase family. Glutamate--tRNA ligase type 2 subfamily.

Its subcellular location is the cytoplasm. It catalyses the reaction tRNA(Glu) + L-glutamate + ATP = L-glutamyl-tRNA(Glu) + AMP + diphosphate. Functionally, catalyzes the attachment of glutamate to tRNA(Glu) in a two-step reaction: glutamate is first activated by ATP to form Glu-AMP and then transferred to the acceptor end of tRNA(Glu). The polypeptide is Glutamate--tRNA ligase (Metallosphaera sedula (strain ATCC 51363 / DSM 5348 / JCM 9185 / NBRC 15509 / TH2)).